The following is a 439-amino-acid chain: Serine hydroxymethyltransferase (439 aa).

Positions 1-20 (MNAPHRDETTASHRDDGFFT) are disordered. (6S)-5,6,7,8-tetrahydrofolate-binding positions include Leu136 and 140 to 142 (GHL). Position 245 is an N6-(pyridoxal phosphate)lysine (Lys245).

The protein belongs to the SHMT family. Homodimer. Requires pyridoxal 5'-phosphate as cofactor.

It localises to the cytoplasm. It carries out the reaction (6R)-5,10-methylene-5,6,7,8-tetrahydrofolate + glycine + H2O = (6S)-5,6,7,8-tetrahydrofolate + L-serine. Its pathway is one-carbon metabolism; tetrahydrofolate interconversion. The protein operates within amino-acid biosynthesis; glycine biosynthesis; glycine from L-serine: step 1/1. In terms of biological role, catalyzes the reversible interconversion of serine and glycine with tetrahydrofolate (THF) serving as the one-carbon carrier. This reaction serves as the major source of one-carbon groups required for the biosynthesis of purines, thymidylate, methionine, and other important biomolecules. Also exhibits THF-independent aldolase activity toward beta-hydroxyamino acids, producing glycine and aldehydes, via a retro-aldol mechanism. The chain is Serine hydroxymethyltransferase from Jannaschia sp. (strain CCS1).